The chain runs to 274 residues: uncharacterized protein (274 aa).

Positions N99–K206 form a coiled coil.

This is an uncharacterized protein from Dictyostelium discoideum (Social amoeba).